A 267-amino-acid chain; its full sequence is GTP cyclohydrolase FolE2 (267 aa).

The protein belongs to the GTP cyclohydrolase IV family.

The enzyme catalyses GTP + H2O = 7,8-dihydroneopterin 3'-triphosphate + formate + H(+). Its pathway is cofactor biosynthesis; 7,8-dihydroneopterin triphosphate biosynthesis; 7,8-dihydroneopterin triphosphate from GTP: step 1/1. In terms of biological role, converts GTP to 7,8-dihydroneopterin triphosphate. The protein is GTP cyclohydrolase FolE2 of Nitrosomonas eutropha (strain DSM 101675 / C91 / Nm57).